A 471-amino-acid polypeptide reads, in one-letter code: UDP-N-acetylmuramate--L-alanine ligase (471 aa).

114–120 (GTHGKTT) serves as a coordination point for ATP.

The protein belongs to the MurCDEF family.

It is found in the cytoplasm. It carries out the reaction UDP-N-acetyl-alpha-D-muramate + L-alanine + ATP = UDP-N-acetyl-alpha-D-muramoyl-L-alanine + ADP + phosphate + H(+). The protein operates within cell wall biogenesis; peptidoglycan biosynthesis. Cell wall formation. The chain is UDP-N-acetylmuramate--L-alanine ligase from Chlorobaculum parvum (strain DSM 263 / NCIMB 8327) (Chlorobium vibrioforme subsp. thiosulfatophilum).